A 460-amino-acid polypeptide reads, in one-letter code: UDP-N-acetylmuramoylalanine--D-glutamate ligase (460 aa).

G123–T129 is an ATP binding site.

This sequence belongs to the MurCDEF family.

It is found in the cytoplasm. The catalysed reaction is UDP-N-acetyl-alpha-D-muramoyl-L-alanine + D-glutamate + ATP = UDP-N-acetyl-alpha-D-muramoyl-L-alanyl-D-glutamate + ADP + phosphate + H(+). Its pathway is cell wall biogenesis; peptidoglycan biosynthesis. Cell wall formation. Catalyzes the addition of glutamate to the nucleotide precursor UDP-N-acetylmuramoyl-L-alanine (UMA). In Enterococcus hirae, this protein is UDP-N-acetylmuramoylalanine--D-glutamate ligase (murD).